Here is a 352-residue protein sequence, read N- to C-terminus: Small glutamine-rich tetratricopeptide repeat-containing protein 2 (352 aa).

Over residues 80–97 (PAAASSSSTAPAAAAATP) the composition is skewed to low complexity. Residues 80 to 103 (PAAASSSSTAPAAAAATPSDEDLA) form a disordered region. TPR repeat units lie at residues 105–138 (AEQLKAEGNKAMSAKDYGAAIEAYGKAIELNPNS), 140–172 (VYFSNRAAAFSQIGQHDSAIDDAKQASKIDPKF), and 173–206 (GKAYSRLGHALFSSGRYQEAVEAYQKGVEVDPSN). The segment at 217 to 236 (KEQLSSSSSSNANDATASRG) is disordered.

Belongs to the SGT family.

In terms of biological role, co-chaperone that binds to the molecular chaperone Hsp70 and regulates Hsp70 ATPase activity. The polypeptide is Small glutamine-rich tetratricopeptide repeat-containing protein 2 (Mycosarcoma maydis (Corn smut fungus)).